Reading from the N-terminus, the 423-residue chain is Serine--tRNA ligase (423 aa).

230–232 (TAE) serves as a coordination point for L-serine. An ATP-binding site is contributed by 261–263 (RSE). L-serine is bound at residue glutamate 284. An ATP-binding site is contributed by 348 to 351 (EISS). Serine 384 provides a ligand contact to L-serine.

This sequence belongs to the class-II aminoacyl-tRNA synthetase family. Type-1 seryl-tRNA synthetase subfamily. Homodimer. The tRNA molecule binds across the dimer.

It is found in the cytoplasm. The catalysed reaction is tRNA(Ser) + L-serine + ATP = L-seryl-tRNA(Ser) + AMP + diphosphate + H(+). It carries out the reaction tRNA(Sec) + L-serine + ATP = L-seryl-tRNA(Sec) + AMP + diphosphate + H(+). It functions in the pathway aminoacyl-tRNA biosynthesis; selenocysteinyl-tRNA(Sec) biosynthesis; L-seryl-tRNA(Sec) from L-serine and tRNA(Sec): step 1/1. Catalyzes the attachment of serine to tRNA(Ser). Is also able to aminoacylate tRNA(Sec) with serine, to form the misacylated tRNA L-seryl-tRNA(Sec), which will be further converted into selenocysteinyl-tRNA(Sec). This is Serine--tRNA ligase from Syntrophobacter fumaroxidans (strain DSM 10017 / MPOB).